The following is a 99-amino-acid chain: Putative membrane protein insertion efficiency factor (99 aa).

Belongs to the UPF0161 family.

The protein resides in the cell membrane. Functionally, could be involved in insertion of integral membrane proteins into the membrane. The protein is Putative membrane protein insertion efficiency factor of Levilactobacillus brevis (strain ATCC 367 / BCRC 12310 / CIP 105137 / JCM 1170 / LMG 11437 / NCIMB 947 / NCTC 947) (Lactobacillus brevis).